A 582-amino-acid polypeptide reads, in one-letter code: Beta-glucosidase 28 (582 aa).

A signal peptide spans 1–21 (MKMHFFILLVITSWLSEKITS). A beta-D-glucoside is bound by residues Q48, H151, and 196-197 (NE). The active-site Proton donor is the E197. A disulfide bond links C216 and C224. Residues N255 and N330 are each glycosylated (N-linked (GlcNAc...) asparagine). Y340 provides a ligand contact to a beta-D-glucoside. N-linked (GlcNAc...) asparagine glycosylation occurs at N370. A beta-D-glucoside is bound at residue E412. E412 (nucleophile) is an active-site residue. N430 carries N-linked (GlcNAc...) asparagine glycosylation. A beta-D-glucoside is bound by residues W462, 469–470 (EW), and F478. N521 and N544 each carry an N-linked (GlcNAc...) asparagine glycan.

This sequence belongs to the glycosyl hydrolase 1 family.

It catalyses the reaction Hydrolysis of terminal, non-reducing beta-D-glucosyl residues with release of beta-D-glucose.. In Arabidopsis thaliana (Mouse-ear cress), this protein is Beta-glucosidase 28.